The chain runs to 343 residues: Heat-inducible transcription repressor HrcA (343 aa).

This sequence belongs to the HrcA family.

Functionally, negative regulator of class I heat shock genes (grpE-dnaK-dnaJ and groELS operons). Prevents heat-shock induction of these operons. The polypeptide is Heat-inducible transcription repressor HrcA (Alkaliphilus metalliredigens (strain QYMF)).